The sequence spans 232 residues: Large ribosomal subunit protein uL3 (232 aa).

The protein belongs to the universal ribosomal protein uL3 family. As to quaternary structure, part of the 50S ribosomal subunit. Forms a cluster with proteins L14 and L19.

In terms of biological role, one of the primary rRNA binding proteins, it binds directly near the 3'-end of the 23S rRNA, where it nucleates assembly of the 50S subunit. The sequence is that of Large ribosomal subunit protein uL3 from Hydrogenobaculum sp. (strain Y04AAS1).